Reading from the N-terminus, the 180-residue chain is Large ribosomal subunit protein uL5 (180 aa).

The protein belongs to the universal ribosomal protein uL5 family. As to quaternary structure, part of the 50S ribosomal subunit; part of the 5S rRNA/L5/L18/L25 subcomplex. Contacts the 5S rRNA and the P site tRNA. Forms a bridge to the 30S subunit in the 70S ribosome.

This is one of the proteins that bind and probably mediate the attachment of the 5S RNA into the large ribosomal subunit, where it forms part of the central protuberance. In the 70S ribosome it contacts protein S13 of the 30S subunit (bridge B1b), connecting the 2 subunits; this bridge is implicated in subunit movement. Contacts the P site tRNA; the 5S rRNA and some of its associated proteins might help stabilize positioning of ribosome-bound tRNAs. The polypeptide is Large ribosomal subunit protein uL5 (Polynucleobacter asymbioticus (strain DSM 18221 / CIP 109841 / QLW-P1DMWA-1) (Polynucleobacter necessarius subsp. asymbioticus)).